Here is a 68-residue protein sequence, read N- to C-terminus: Small integral membrane protein 10-like protein 3 (68 aa).

Expressed specifically in salivary glands (at protein level).

This is Small integral membrane protein 10-like protein 3 from Mus musculus (Mouse).